Here is a 451-residue protein sequence, read N- to C-terminus: Molybdate-anion transporter (451 aa).

A run of 12 helical transmembrane segments spans residues 1-21 (MLVTAYLFLLGLLALWGVLEF), 45-65 (YDFYRTYFPALAADWLQGPYL), 79-99 (IAIIYVCGFGASVFAGLVSVP), 130-150 (FVLMTGRVLGGFSSSLLFSCF), 180-200 (NGGIAIAAGITANVCAEWLGL), 201-221 (GPASPSVLAVPLLVLSVVLVI), 251-271 (VLLLGTIQALFESVVYIFIFL), 281-301 (APLGIAFSSFMAASAVGSSLY), 316-336 (VLCLSILMVFFSLFMLTFSTA), 346-366 (LLAFLLIELACGLYFPAMRFL), 378-398 (GVLNWFRVPLNLLAGLGLLVL), and 410-430 (MFSLCAVTMLLALLCVVSLFT).

This sequence belongs to the major facilitator superfamily.

It localises to the cell membrane. Functionally, mediates high-affinity intracellular uptake of the rare oligo-element molybdenum. This chain is Molybdate-anion transporter (mfsd5), found in Xenopus laevis (African clawed frog).